Here is a 96-residue protein sequence, read N- to C-terminus: MVCVPCFIVPVLLYLWHKFVQPILLKYWNPWEKKDADGNMIKTEPKNPFDCAGGVCRWAGKKTAVPPGHDPVGPTVAADTATSDAVDDAASSKKTL.

Positions 65–96 are disordered; the sequence is VPPGHDPVGPTVAADTATSDAVDDAASSKKTL. Residues 75–96 are compositionally biased toward low complexity; it reads TVAADTATSDAVDDAASSKKTL.

The protein belongs to the UPF0729 family.

The protein is UPF0729 protein AGAP000931 of Anopheles gambiae (African malaria mosquito).